The sequence spans 1178 residues: MADADEYSTAPTQQEITPLQTTATIINAISGECITTNVDFFVSLDKFKQFIARKWKIPPDQLLILLPYGNKLKPSMFKELLINRSFTLNDFYVYDRRLFSLVSKPTPTNLLTSKDSNPMNSPNSNDLTETLEYLIKNSHISQYQGSDTIMIKPMPSPLEDADVDLSRLNYHSVTSLLTTNLGWLSALEIDVHYFKSLIPDIIAHIKRIFDGLTVCSQYLKLYCFDVESLYNSNVQFLNQLVDNGMTSKWEKCFNDTLSKLTALEGDSLQKFINIESLLENEKSVKILNHSINGKLNKIKREIDENASFRDIITVNIDRLRQMFTPNESKFELEDQMAESFEVLVSEMRTRSRNVLDKEEEEFNSQEFLKSMNVMLEKDKKESVKTLFTISQALYSQIGELIDLKKSLQKHAVAILGNIAFTQMEILGIKRLLLNECNKDLELYKKYEVEFAQVEDLPLIYGLYLIEKYRRLSWFQQILSFISNFNQDLELFKQNELRTRNKWVKNFGSIATVFCEDLLSSSDFKRLNEYHSHTSPPNEDEEDENENSIANYRQDLVKVSQAIDNYMTQIKETDVSEPIIDLLSKTLFETKRFHIIYSNFKNNNNNSSNGNSISPEGSIALKSDDVVKGYKTRIKKLESLLHEFQYSDIGHWPQGVLNTHLKPFRGSATSINKKKFLGASVLLEPANISEVNIDSVSQANNHQIQELESNVDDLLHQLQLLKEENNRKSMQISEMGKKISDLEVEKTAYRETLTNLNQELARLTNEEQSHRTEIFTLNASFKKQLNDIISQDNEKIEKLTGDYDDVSKSRERLQMDLDESNKKHEQEVNLLKADIERLGKQIVTSEKSYAETNSSSMEKGEKFETIPLAEDPGRENQISAYTQTLQDRIFDIISTNIFILENIGLLLTFDNNNNIQIRRVKGLKKGTAQSNILDESTQMLDAHDNSLIKSPVFQKLKDEYELIKSVANGSEKDTQQSIFLGNITQLYDNKLYEVAVIRRFKDIETLAKKLTKENKIKRTLLERFQREKVTLRNFQIGDLALFLPTRENVNSVGSMSSSTSSLSSSFSSVDLSTPPPLDAMSIQSSPSVIHSNVINQASISGRDKNKLMRPWAAFTAFEESTRYFLKDEKGLTKGKEWFVGRIVTLEHFVADSPSNNPFRLPKGSVWFQVTAVVVSYQGV.

2 coiled-coil regions span residues 538–572 (EDEE…IKET) and 696–850 (SQAN…SYAE).

The protein belongs to the ATG11 family. Homodimer and potential homooligomers. Interacts with ATG1 kinase. Interacts with the ATG19 cargo protein transporter. Interacts with the ATG34 cargo protein transporter. Interacts with ATG9. Interacts with ATG17. Interacts with ATG20. Interacts with ATG30. Interacts with ATG32; to recruit ATG11 to mitochondria. Interacts with ATG36. Interacts with YPT1. In terms of processing, acetylated by the NuA4 histone acetyltransferase (HAT) complex.

The protein localises to the preautophagosomal structure membrane. It is found in the vacuole membrane. In terms of biological role, involved in cytoplasm to vacuole transport (Cvt), pexophagy, mitophagy and nucleophagy. Recruits mitochondria for their selective degradation via autophagy (mitophagy) during starvation, through its interaction with ATG32. Works as scaffold proteins that recruit ATG proteins to the pre-autophagosome (PAS), the site of vesicle/autophagosome formation. Required for ATG9 anterograde transport from the mitochondria to the PAS. Also recruits the ATG19-prAPE1 complex to the PAS. Required for the Cvt vesicles completion. Plays a significant role in life span extension. This Saccharomyces cerevisiae (strain ATCC 204508 / S288c) (Baker's yeast) protein is Autophagy-related protein 11 (ATG11).